The primary structure comprises 558 residues: GPI mannosyltransferase 3 (558 aa).

A run of 4 helical transmembrane segments spans residues 53–73 (GLRS…LKLL), 81–101 (VWFA…VSVF), 164–184 (AYCG…LLTL), and 190–210 (VPFL…AVVL). An N-linked (GlcNAc...) asparagine glycan is attached at asparagine 220. A helical transmembrane segment spans residues 234–254 (IVLTGLIVLVAVLGGVMVLDY). Residue asparagine 275 is glycosylated (N-linked (GlcNAc...) asparagine). Transmembrane regions (helical) follow at residues 292 to 312 (VLVG…LVLW), 323 to 343 (PVLG…LIDH), 348 to 368 (FVFV…VRWS), and 372 to 392 (AVVV…IYLM).

This sequence belongs to the glycosyltransferase 22 family. PIGB subfamily.

The protein resides in the endoplasmic reticulum membrane. The protein operates within glycolipid biosynthesis; glycosylphosphatidylinositol-anchor biosynthesis. Its function is as follows. Mannosyltransferase involved in glycosylphosphatidylinositol-anchor biosynthesis. Transfers the third alpha-1,2-mannose to Man2-GlcN-acyl-PI during GPI precursor assembly. In Trypanosoma brucei brucei, this protein is GPI mannosyltransferase 3 (GPI10).